The primary structure comprises 176 residues: Peptidoglycan-associated lipoprotein (176 aa).

A signal peptide spans 1–21; the sequence is MKAGSFYKLGLLVASAVLVAA. Cys-22 is lipidated: N-palmitoyl cysteine. A lipid anchor (S-diacylglycerol cysteine) is attached at Cys-22. Residues 60-176 form the OmpA-like domain; the sequence is YTTQAPHNQL…RVEFIYEATR (117 aa).

It belongs to the Pal lipoprotein family. As to quaternary structure, the Tol-Pal system is composed of five core proteins: the inner membrane proteins TolA, TolQ and TolR, the periplasmic protein TolB and the outer membrane protein Pal. They form a network linking the inner and outer membranes and the peptidoglycan layer.

The protein localises to the cell outer membrane. Its function is as follows. Part of the Tol-Pal system, which plays a role in outer membrane invagination during cell division and is important for maintaining outer membrane integrity. Very strongly associated with the peptidoglycan. This chain is Peptidoglycan-associated lipoprotein, found in Legionella pneumophila.